The chain runs to 378 residues: Glutamate 5-kinase (378 aa).

ATP is bound at residue Lys-14. Substrate contacts are provided by Ser-54, Asp-141, and Asn-153. An ATP-binding site is contributed by 173–174; sequence SD. In terms of domain architecture, PUA spans 279-356; the sequence is AGRLTVDAGA…DEISAILGYD (78 aa).

It belongs to the glutamate 5-kinase family.

The protein localises to the cytoplasm. It carries out the reaction L-glutamate + ATP = L-glutamyl 5-phosphate + ADP. It participates in amino-acid biosynthesis; L-proline biosynthesis; L-glutamate 5-semialdehyde from L-glutamate: step 1/2. Its function is as follows. Catalyzes the transfer of a phosphate group to glutamate to form L-glutamate 5-phosphate. The polypeptide is Glutamate 5-kinase (Brucella canis (strain ATCC 23365 / NCTC 10854 / RM-666)).